The sequence spans 198 residues: dTTP/UTP pyrophosphatase (198 aa).

Catalysis depends on Asp75, which acts as the Proton acceptor.

The protein belongs to the Maf family. YhdE subfamily. A divalent metal cation is required as a cofactor.

Its subcellular location is the cytoplasm. The catalysed reaction is dTTP + H2O = dTMP + diphosphate + H(+). The enzyme catalyses UTP + H2O = UMP + diphosphate + H(+). In terms of biological role, nucleoside triphosphate pyrophosphatase that hydrolyzes dTTP and UTP. May have a dual role in cell division arrest and in preventing the incorporation of modified nucleotides into cellular nucleic acids. The sequence is that of dTTP/UTP pyrophosphatase from Wolbachia sp. subsp. Drosophila simulans (strain wRi).